The sequence spans 353 residues: Guanine nucleotide-binding protein subunit alpha (353 aa).

The disordered stretch occupies residues Met1–Arg25. Residue Gly2 is the site of N-myristoyl glycine attachment. Cys3 carries the S-palmitoyl cysteine lipid modification. Over residues Thr7–Arg25 the composition is skewed to basic and acidic residues. One can recognise a G-alpha domain in the interval Asn32–Ile353. The segment at Lys35–Thr48 is G1 motif. The GTP site is built by Glu43, Ser44, Gly45, Lys46, Ser47, Thr48, Asp150, Leu175, Thr181, Gly203, Asn269, Lys270, Asp272, and Ala325. Position 47 (Ser47) interacts with Mg(2+). The G2 motif stretch occupies residues Asp173–Thr181. Position 181 (Thr181) interacts with Mg(2+). The interval Tyr196–Arg205 is G3 motif. Positions Ile265 to Asp272 are G4 motif. Positions Thr323–Thr328 are G5 motif.

The protein belongs to the G-alpha family. G(q) subfamily. As to quaternary structure, g proteins are composed of 3 units; alpha, beta and gamma. The alpha chain contains the guanine nucleotide binding site. Requires Mg(2+) as cofactor.

Functionally, guanine nucleotide-binding proteins (G proteins) are involved as modulators or transducers in various transmembrane signaling systems. The sequence is that of Guanine nucleotide-binding protein subunit alpha (CTG1) from Colletotrichum trifolii.